Here is a 153-residue protein sequence, read N- to C-terminus: MVIGSFPVGKIFIHGVKRISKPFGDLLIWMGKHHPFIRRYIIIPPAQLYNTFEVRSKLRMLRLKQPRRIPPLSTPVATRLGADMLSEAFVFGIGAGLIYYELSKTYTKTKKQNQEIEDQKRVLDECVDCISADVERNQREINWIKAALKNVEK.

A coiled-coil region spans residues 101 to 153 (ELSKTYTKTKKQNQEIEDQKRVLDECVDCISADVERNQREINWIKAALKNVEK).

This sequence belongs to the OPA3 family.

This chain is Putative OPA3-like protein CG43998, found in Drosophila melanogaster (Fruit fly).